A 134-amino-acid chain; its full sequence is Large ribosomal subunit protein bL17 (134 aa).

Belongs to the bacterial ribosomal protein bL17 family. In terms of assembly, part of the 50S ribosomal subunit. Contacts protein L32.

This is Large ribosomal subunit protein bL17 from Colwellia psychrerythraea (strain 34H / ATCC BAA-681) (Vibrio psychroerythus).